Here is a 385-residue protein sequence, read N- to C-terminus: Isocitrate dehydrogenase [NAD] subunit beta, mitochondrial (385 aa).

The N-terminal 34 residues, 1–34 (MAALSGVRWLTRALVSAGNPGAWRGLSTSAAAHA), are a transit peptide targeting the mitochondrion. K199 is modified (N6-acetyllysine).

Belongs to the isocitrate and isopropylmalate dehydrogenases family. Heterooligomer of subunits alpha (IDH3A), beta (IDH3B), and gamma (IDH3G) in the apparent ratio of 2:1:1. The heterodimer containing one IDH3A and one IDH3B subunit and the heterodimer containing one IDH3A and one IDH3G subunit assemble into a heterotetramer (which contains two subunits of IDH3A, one of IDH3B and one of IDH3G) and further into the heterooctamer.

It is found in the mitochondrion. The heterotetramer and the heterodimer composed of IDH3A and IDH3G subunits can be allosterically activated by citrate (CIT) or/and ADP, and the two activators can act independently or synergistically. The heterodimer composed of IDH3A and IDH3B subunits cannot be allosterically regulated and the allosteric regulation of the heterotetramer is through the IDH3G subunit and not the IDH3B subunit. The IDH3G subunit contains the allosteric site which consists of a CIT-binding site and an ADP-binding site, and the binding of CIT and ADP causes conformational changes at the allosteric site which are transmitted to the active site in the catalytic subunit (IDH3A) through a cascade of conformational changes at the heterodimer interface, leading to stabilization of the isocitrate-binding at the active site and thus activation of the enzyme. ATP can activate the heterotetramer and the heterodimer composed of IDH3A and IDH3G subunits at low concentrations but inhibits their activities at high concentrations, whereas ATP exhibits only inhibitory effect on the heterodimer composed of IDH3A and IDH3B subunits. Plays a structural role to facilitate the assembly and ensure the full activity of the enzyme catalyzing the decarboxylation of isocitrate (ICT) into alpha-ketoglutarate. The heterodimer composed of the alpha (IDH3A) and beta (IDH3B) subunits and the heterodimer composed of the alpha (IDH3A) and gamma (IDH3G) subunits, have considerable basal activity but the full activity of the heterotetramer (containing two subunits of IDH3A, one of IDH3B and one of IDH3G) requires the assembly and cooperative function of both heterodimers. The sequence is that of Isocitrate dehydrogenase [NAD] subunit beta, mitochondrial (IDH3B) from Macaca fascicularis (Crab-eating macaque).